We begin with the raw amino-acid sequence, 548 residues long: Probable aquaglyceroporin-4 (548 aa).

Over residues 1–22 the composition is skewed to polar residues; the sequence is MAGTQDQSQDYFSKPTTPSTPG. Disordered stretches follow at residues 1 to 63, 76 to 101, and 158 to 270; these read MAGT…LPST, SRGF…SHFH, and KEET…ESGD. At 1–290 the chain is on the cytoplasmic side; the sequence is MAGTQDQSQD…ARLRARHPEP (290 aa). Residues 38–48 show a composition bias toward basic and acidic residues; the sequence is PDRESGTERAK. 2 stretches are compositionally biased toward polar residues: residues 77–97 and 171–200; these read RGFS…PQHS and SRTT…SRTT. Positions 249–265 are enriched in basic and acidic residues; it reads PDFKVDGEPLGHQEKPC. The chain crosses the membrane as a helical span at residues 291–311; that stretch reads LAEFLATAVAIFLGLTGTLSV. An N-linked (GlcNAc...) asparagine glycan is attached at Asn312. Residues 312 to 327 are Extracellular-facing; the sequence is NLSATQSQPYGTYETS. Residues 328-348 form a helical membrane-spanning segment; sequence CWAWGFAWMFGIYLGGGVSGA. At 349–369 the chain is on the cytoplasmic side; it reads HMNPAISVSLSIFRGFPWRQC. The NPA 1 motif lies at 351-353; sequence NPA. Residues 370–390 form a helical membrane-spanning segment; it reads VIYVFVQFIASIVAGALAYAM. Topologically, residues 391–420 are extracellular; it reads YADSINHVDPDMTKMSMTFFSTPREWVTLK. A helical transmembrane segment spans residues 421 to 441; it reads SAFFNQVVGSAIMMIAVFALG. Residues 442–448 are Cytoplasmic-facing; sequence DDQNNPP. A helical membrane pass occupies residues 449–469; it reads GAGMHALVLGFLVTTLKFTLG. Residues 470–508 lie on the Extracellular side of the membrane; that stretch reads YNIGSALNPASDFGPRVIAYAVGFRGDNVFHSGWWFYGP. An NPA 2 motif is present at residues 477-479; it reads NPA. The helical transmembrane segment at 509 to 529 threads the bilayer; sequence WAATLIGSLLGCTLYDGFVFV. The Cytoplasmic segment spans residues 530–548; that stretch reads GSESPVNFRVDKRVKKLFN.

It belongs to the MIP/aquaporin (TC 1.A.8) family.

The protein localises to the membrane. It catalyses the reaction H2O(in) = H2O(out). It carries out the reaction glycerol(in) = glycerol(out). Its function is as follows. Probable water/glycerol channel that may have redundant functions with FgAQP2. This Gibberella zeae (strain ATCC MYA-4620 / CBS 123657 / FGSC 9075 / NRRL 31084 / PH-1) (Wheat head blight fungus) protein is Probable aquaglyceroporin-4.